We begin with the raw amino-acid sequence, 344 residues long: Lipopolysaccharide heptosyltransferase 3 (344 aa).

It belongs to the glycosyltransferase 9 family.

The catalysed reaction is an L-alpha-D-Hep-(1-&gt;3)-4-O-phospho-L-alpha-D-Hep-(1-&gt;5)-[alpha-Kdo-(2-&gt;4)]-alpha-Kdo-(2-&gt;6)-lipid A + ADP-L-glycero-beta-D-manno-heptose = an L-alpha-D-Hep-(1-&gt;7)-L-alpha-D-Hep-(1-&gt;3)-4-O-phospho-L-alpha-D-Hep-(1-&gt;5)-[alpha-Kdo-(2-&gt;4)]-alpha-Kdo-(2-&gt;6)-lipid A + ADP + H(+). It carries out the reaction L-alpha-D-Hep-(1-&gt;3)-4-O-phospho-L-alpha-D-Hep-(1-&gt;5)-[alpha-Kdo-(2-&gt;4)]-alpha-Kdo-(2-&gt;6)-lipid A (E. coli) + ADP-L-glycero-beta-D-manno-heptose = L-alpha-D-Hep-(1-&gt;7)-L-alpha-D-Hep-(1-&gt;3)-4-O-phospho-L-alpha-D-Hep-(1-&gt;5)-[alpha-Kdo-(2-&gt;4)]-alpha-Kdo-(2-&gt;6)-lipid A (E. coli) + ADP + H(+). It functions in the pathway bacterial outer membrane biogenesis; LPS core biosynthesis. Functionally, glycosyltransferase involved in the biosynthesis of the core oligosaccharide region of lipopolysaccharide (LPS). Catalyzes the addition of the third heptose unit (HepIII) to the second heptose unit (HepII) of the phospho-Hep2-Kdo2-lipid A module. This is Lipopolysaccharide heptosyltransferase 3 from Escherichia coli (strain K12).